The following is a 614-amino-acid chain: Vitamin B12 transporter BtuB (614 aa).

The first 20 residues, 1–20 (MIKKASLLTACSVTAFSAWA), serve as a signal peptide directing secretion. The TonB box signature appears at 26–33 (DTLVVTAI). The TBDR plug domain occupies 38 to 152 (PRSTVLAPTT…IGGVVNIITT (115 aa)). Cyanocob(III)alamin-binding positions include Leu-83, Ser-85, Asn-92, and 110–111 (VS). Residues 155–614 (EPGTEISAGW…EYTLSGSYTF (460 aa)) enclose the TBDR beta-barrel domain. The next 3 beta stranded transmembrane spans lie at 158-165 (TEISAGWG), 169-178 (YQNYDVSTQQ), and 184-195 (TRVTLLGDYAHT). Residues Asp-199, Gln-211, Asp-213, and Asp-215 each contribute to the Ca(2+) site. The next 2 beta stranded transmembrane spans lie at 217–227 (FLSKTLYGALE) and 232–248 (DAWSGFVRGYGYDNRTN). Ca(2+) is bound by residues Tyr-249 and Asp-250. A cyanocob(III)alamin-binding site is contributed by Ala-251. Asp-261 is a Ca(2+) binding site. 14 consecutive transmembrane segments (beta stranded) span residues 263 to 277 (RKLYSQSWDAGLRYN), 279 to 296 (ELIKSQLITSYSHSKDYN), 309 to 325 (TLDEMKQYTVQWANNVI), 328 to 337 (HGSIGAGVDW), 353 to 369 (YDQRNTGIYLTGLQQVG), 371 to 381 (FTFEGAARSDD), 385 to 400 (FGRHGTWQTSAGWEFI), 403 to 417 (YRFIASYGTSYKAPN), 434 to 443 (KSKQWEGAFE), 449 to 458 (VNWRISGYRN), 473 to 490 (YYNEGKARIKGVEATANF), 494 to 509 (PLTHTVSYDYVDARNA), 517 to 529 (RRAKQQVKYQLDW), and 535 to 550 (DWGITYQYLGTRYDKD). A cyanocob(III)alamin-binding site is contributed by Thr-309. Arg-517 contacts cyanocob(III)alamin. Cyanocob(III)alamin is bound at residue Tyr-551. Beta stranded transmembrane passes span 558–572 (TVKMGGVSLWDLAVA), 585–596 (IANLFDKDYETV), and 602–614 (AGREYTLSGSYTF). The TonB C-terminal box signature appears at 597 to 614 (YGYQTAGREYTLSGSYTF).

Belongs to the TonB-dependent receptor family. BtuB (TC 1.B.14.3.1) subfamily.

The protein resides in the cell outer membrane. Functionally, involved in the active translocation of vitamin B12 (cyanocobalamin) across the outer membrane to the periplasmic space. It derives its energy for transport by interacting with the trans-periplasmic membrane protein TonB. This is Vitamin B12 transporter BtuB from Shigella flexneri serotype 5b (strain 8401).